Reading from the N-terminus, the 753-residue chain is Catalase-peroxidase (753 aa).

The tryptophyl-tyrosyl-methioninium (Trp-Tyr) (with M-264) cross-link spans 90–238; sequence WHSAGTYRVT…LASSHMGLIY (149 aa). The active-site Proton acceptor is His91. The interval 196–220 is disordered; it reads SEGQEGHEGHGVVQGDESKKQHTDI. Positions 238-264 form a cross-link, tryptophyl-tyrosyl-methioninium (Tyr-Met) (with W-90); sequence YVNPEGPDGIPDPVASAKDIRVTFGRM. Position 279 (His279) interacts with heme b.

This sequence belongs to the peroxidase family. Peroxidase/catalase subfamily. As to quaternary structure, homodimer or homotetramer. It depends on heme b as a cofactor. Post-translationally, formation of the three residue Trp-Tyr-Met cross-link is important for the catalase, but not the peroxidase activity of the enzyme.

The protein localises to the cytoplasm. The catalysed reaction is H2O2 + AH2 = A + 2 H2O. The enzyme catalyses 2 H2O2 = O2 + 2 H2O. Inhibited by KCN. In terms of biological role, bifunctional enzyme with both catalase and broad-spectrum peroxidase activity. This Neurospora crassa (strain ATCC 24698 / 74-OR23-1A / CBS 708.71 / DSM 1257 / FGSC 987) protein is Catalase-peroxidase.